The chain runs to 138 residues: Small ribosomal subunit protein uS11c (138 aa).

Residues 1–24 form a disordered region; the sequence is MIKPIPRISSRRNGRIGSRKTGRR. Basic residues predominate over residues 9 to 24; the sequence is SSRRNGRIGSRKTGRR.

The protein belongs to the universal ribosomal protein uS11 family. As to quaternary structure, part of the 30S ribosomal subunit.

It is found in the plastid. The protein resides in the chloroplast. This is Small ribosomal subunit protein uS11c from Lemna minor (Common duckweed).